A 394-amino-acid chain; its full sequence is Guanine nucleotide-binding protein G(s) subunit alpha isoforms short (394 aa).

The tract at residues 1–23 (MGCLGNSKTEDQRNEEKAQREAN) is disordered. Gly2 carries N-palmitoyl glycine lipidation. Cys3 carries the S-palmitoyl cysteine lipid modification. Over residues 8–23 (KTEDQRNEEKAQREAN) the composition is skewed to basic and acidic residues. A G-alpha domain is found at 39 to 394 (ATHRLLLLGA…RMHLRQYELL (356 aa)). Residues 42 to 55 (RLLLLGAGESGKST) are G1 motif. 47–55 (GAGESGKST) contacts GTP. Ser54 is a binding site for Mg(2+). Positions 68 to 90 (FNGEGGEEDPQAARSNSDGEKAT) are disordered. The segment at 196–204 (DLLRCRVLT) is G2 motif. GTP-binding positions include 197-204 (LLRCRVLT), 223-227 (DVGGQ), and 292-295 (NKQD). Residue Thr204 coordinates Mg(2+). Residues 219–228 (FHMFDVGGQR) are G3 motif. A G4 motif region spans residues 288 to 295 (ILFLNKQD). A Glycyl lysine isopeptide (Lys-Gly) (interchain with G-Cter in ubiquitin) cross-link involves residue Lys300. A Phosphoserine modification is found at Ser352. Residues 364–369 (TCAVDT) are G5 motif. Residue Ala366 coordinates GTP.

The protein belongs to the G-alpha family. G(s) subfamily. As to quaternary structure, heterotrimeric G proteins are composed of 3 units; alpha, beta and gamma. The alpha chain contains the guanine nucleotide binding site. Component of the TAS2R14-GNAS2 complex, consisting of TAS2R14, GNAS2, GNB1 and GNG2; within the complex interacts with TAS2R14; this complex plays a role in the perception of bitterness. Interacts with CRY1; the interaction may block GPCR-mediated regulation of cAMP concentrations. Interacts with ADCY6 and stimulates its adenylyl cyclase activity. Interacts with ADCY2 and ADCY5. Interacts (GDP-bound form) with RIC8B; promoting GNAS folding and association with the plasma membrane. Stimulates the ADCY5 adenylyl cyclase activity. Interaction with SASH1. Interacts with GASL2L2.

The protein resides in the cell membrane. The enzyme catalyses GTP + H2O = GDP + phosphate + H(+). Functionally, guanine nucleotide-binding proteins (G proteins) function as transducers in numerous signaling pathways controlled by G protein-coupled receptors (GPCRs). The alpha chain contains the guanine nucleotide binding site and alternates between an active, GTP-bound state and an inactive, GDP-bound state. Signaling by an activated GPCR promotes GDP release and GTP binding. The alpha subunit has a low GTPase activity that converts bound GTP to GDP, thereby terminating the signal. Both GDP release and GTP hydrolysis are modulated by numerous regulatory proteins. Signaling involves the activation of adenylyl cyclases, resulting in increased levels of the signaling molecule cAMP. Functions downstream of beta-adrenergic receptors. Stimulates the Ras signaling pathway via RAPGEF2. In Mus musculus (Mouse), this protein is Guanine nucleotide-binding protein G(s) subunit alpha isoforms short (Gnas).